We begin with the raw amino-acid sequence, 569 residues long: Acetate/butyrate--CoA ligase AAE7, peroxisomal (569 aa).

Residues 567–569 carry the Microbody targeting signal motif; sequence SRL.

It belongs to the ATP-dependent AMP-binding enzyme family. In terms of tissue distribution, expressed in roots, leaves, stems, flowers and developing seeds.

The protein resides in the peroxisome. It carries out the reaction acetate + ATP + CoA = acetyl-CoA + AMP + diphosphate. It catalyses the reaction a medium-chain fatty acid + ATP + CoA = a medium-chain fatty acyl-CoA + AMP + diphosphate. Functionally, peroxisomal acetate/butyrate--CoA ligase that is probably involved in the activation of exogenous acetate for entry into the glyoxylate cycle. May play a role to prevent carbon loss from peroxisomes during lipid mobilization. In vitro, is active with both acetate and butyrate. The protein is Acetate/butyrate--CoA ligase AAE7, peroxisomal (AAE7) of Arabidopsis thaliana (Mouse-ear cress).